A 325-amino-acid chain; its full sequence is Probable siderophore-binding lipoprotein YfiY (325 aa).

The first 20 residues, M1–A20, serve as a signal peptide directing secretion. Residue C21 is the site of N-palmitoyl cysteine attachment. C21 carries S-diacylglycerol cysteine lipidation. Residues R56–K325 enclose the Fe/B12 periplasmic-binding domain. S290 bears the Phosphoserine mark. Phosphothreonine is present on T302.

This sequence belongs to the bacterial solute-binding protein 8 family. In terms of assembly, the complex is composed of one ATP-binding protein (YusV), two transmembrane proteins (YfiZ and YfhA) and a solute-binding protein (YfiY). Interacts with FloT.

It is found in the cell membrane. The protein localises to the cytoplasm. Its subcellular location is the membrane raft. Part of the ABC transporter complex YfiYZ/YfhA/YusV involved in import of the iron-hydroxamate siderophores schizokinen, arthrobactin and corprogen. Binds the siderophores and delivers them to the surface of YfiZ/YfhA. The chain is Probable siderophore-binding lipoprotein YfiY (yfiY) from Bacillus subtilis (strain 168).